A 140-amino-acid polypeptide reads, in one-letter code: ATP synthase epsilon chain (140 aa).

It belongs to the ATPase epsilon chain family. As to quaternary structure, F-type ATPases have 2 components, CF(1) - the catalytic core - and CF(0) - the membrane proton channel. CF(1) has five subunits: alpha(3), beta(3), gamma(1), delta(1), epsilon(1). CF(0) has three main subunits: a, b and c.

The protein resides in the cell inner membrane. Functionally, produces ATP from ADP in the presence of a proton gradient across the membrane. The polypeptide is ATP synthase epsilon chain (Xylella fastidiosa (strain Temecula1 / ATCC 700964)).